Here is a 456-residue protein sequence, read N- to C-terminus: MKRVYFIGIGGIGMSAIARYFHARGFNVCGYDLTPSPITDQLIKEGIEVHFSDDLNMIPKAFFSPTDSLIVYTPAVPADHSELTYFRSNGYRVVKRAEILGEITLIERALCVAGTHGKTTTSTLLAHLLKQSHVDCNAFLGGISNNYQSNLLLSDKSDLVVVEADEFDRSFHHLKPFMAIITSADPDHMDIYGTAENYRDSFEHFTSLIQSGGALVLKYGAPVNPRLGSDVSLFTYSSDDRQADYFASDITIRDGRLFFTWHYPGGQLEEVELGVPVHINVENAVAAMAIAHLNGVTVEELRSGIASFKGSHRRFEKVLDTERVVLIDDYAHHPVELDAAIRSVREIYSRKHIMGIFQPHLYSRTADFYQDFARSLSMLDEVVLLDIYPARELPLPGVTSRLILDLIENPNKTLVSKNDLLDYLHGNEIPDVVLILGAGDIDRLVIPVKQYLQTLC.

Residue 114–120 (GTHGKTT) participates in ATP binding.

This sequence belongs to the MurCDEF family.

The protein localises to the cytoplasm. It carries out the reaction UDP-N-acetyl-alpha-D-muramate + L-alanine + ATP = UDP-N-acetyl-alpha-D-muramoyl-L-alanine + ADP + phosphate + H(+). The protein operates within cell wall biogenesis; peptidoglycan biosynthesis. In terms of biological role, cell wall formation. The protein is UDP-N-acetylmuramate--L-alanine ligase of Porphyromonas gingivalis (strain ATCC 33277 / DSM 20709 / CIP 103683 / JCM 12257 / NCTC 11834 / 2561).